We begin with the raw amino-acid sequence, 916 residues long: Transmembrane channel-like protein 2-A (916 aa).

Residues Met1 to Asp13 show a composition bias toward basic and acidic residues. A disordered region spans residues Met1–Gly159. The Cytoplasmic portion of the chain corresponds to Met1–Asn271. Residues Val14–Glu26 are compositionally biased toward acidic residues. Basic residues-rich tracts occupy residues Ser31–Gly45 and Lys62–Pro72. The segment covering Asn97 to Lys107 has biased composition (basic and acidic residues). Residues Lys108 to Gly117 show a composition bias toward basic residues. Over residues Lys118 to Lys138 the composition is skewed to basic and acidic residues. A compositionally biased stretch (acidic residues) spans Asp145–Ser157. Residues Leu272–Pro292 traverse the membrane as a helical segment. The Extracellular portion of the chain corresponds to Tyr293 to Arg344. The helical transmembrane segment at Leu345 to Ile365 threads the bilayer. Residues Arg366–Arg438 are Cytoplasmic-facing. A helical membrane pass occupies residues Val439–Val459. Residues Val460–Asn478 lie on the Extracellular side of the membrane. Residues Glu479–Ala499 form a helical membrane-spanning segment. At Glu500 to Arg516 the chain is on the cytoplasmic side. The helical transmembrane segment at Ile517–Asn537 threads the bilayer. At Ala538–Gly649 the chain is on the extracellular side. The chain crosses the membrane as a helical span at residues Leu650–Ile670. Topologically, residues Asn671 to Asn704 are cytoplasmic. The helical transmembrane segment at Phe705–Ile725 threads the bilayer. Residues Met726 to Leu762 lie on the Extracellular side of the membrane. Residues Phe763–Ile783 form a helical membrane-spanning segment. Over Tyr784 to Gln916 the chain is Cytoplasmic. Positions Met804 to Lys818 are enriched in basic and acidic residues. A disordered region spans residues Met804–Gln916. The segment covering Ala883–Gly892 has biased composition (low complexity).

It belongs to the TMC family. In terms of assembly, interacts (via N-terminus) with both isoforms CD1 and CD3 of PCDH15A (via cytoplasmic domain); this interaction is required for mechanotransduction of the hair cells and correct localization of PCDH15A in hair bundles of the hair cells. As to expression, in adults, expression is restricted to the hair cells of inner ear and lateral line organ. Expressed at higher levels in the larval inner ear than in the lateral-line neuromasts.

The protein localises to the cell membrane. It catalyses the reaction Ca(2+)(in) = Ca(2+)(out). Pore-forming subunit of the mechanotransducer (MET) non-selective cation channel complex located at tips of hair-cell stereocilia. Highly permeable to calcium and likely transports monovalent cations. The sequence is that of Transmembrane channel-like protein 2-A from Danio rerio (Zebrafish).